Here is a 258-residue protein sequence, read N- to C-terminus: MGVAIRVIPCLDVDNGRVVKGVNFENLRDAGDPVELAKRYDEEGADELTFLDVTASKHGRGTMLDVVRRTADQVFIPLTVGGGVRSEEDVDQLLRAGADKVSVNTSAIARPELLSELSKRFGAQCIVLSVDARRVPEGGTPQPSGFEVTTHGGSKSAELDAIEWAKRGEELGVGEILLNSMDGDGTKNGFDLELLEKVRAAVSIPVIASGGAGKAEHFPPAVAAGANAVLAATIFHFREVTIAEVKGAIKDAGFEVRK.

Catalysis depends on residues D12 and D131.

This sequence belongs to the HisA/HisF family. Heterodimer of HisH and HisF.

The protein localises to the cytoplasm. The enzyme catalyses 5-[(5-phospho-1-deoxy-D-ribulos-1-ylimino)methylamino]-1-(5-phospho-beta-D-ribosyl)imidazole-4-carboxamide + L-glutamine = D-erythro-1-(imidazol-4-yl)glycerol 3-phosphate + 5-amino-1-(5-phospho-beta-D-ribosyl)imidazole-4-carboxamide + L-glutamate + H(+). The protein operates within amino-acid biosynthesis; L-histidine biosynthesis; L-histidine from 5-phospho-alpha-D-ribose 1-diphosphate: step 5/9. Its function is as follows. IGPS catalyzes the conversion of PRFAR and glutamine to IGP, AICAR and glutamate. The HisF subunit catalyzes the cyclization activity that produces IGP and AICAR from PRFAR using the ammonia provided by the HisH subunit. The protein is Imidazole glycerol phosphate synthase subunit HisF of Corynebacterium glutamicum (strain R).